We begin with the raw amino-acid sequence, 498 residues long: Myotilin (498 aa).

Disordered stretches follow at residues 1–46 (MFNY…QPRQ), 64–151 (MSSS…HEIQ), and 202–241 (QDDSGAQDSQQHNSEHARLQVPTSQVRSRSTSRGDVNDQD). Arg-20 bears the Omega-N-methylarginine mark. Positions 29 to 43 (SSFSSQTKQSSIIIQ) are enriched in low complexity. Residues 77–138 (AGSNPGQRVT…INAKPSQTAN (62 aa)) are compositionally biased toward polar residues. The segment at 79-150 (SNPGQRVTTT…PIPRTPDHEI (72 aa)) is necessary for interaction with ACTN1. A compositionally biased stretch (low complexity) spans 202–212 (QDDSGAQDSQQ). Positions 215–493 (SEHARLQVPT…QRLAAQSGLY (279 aa)) are necessary for interaction with FLNC. Residues 215-498 (SEHARLQVPT…QSGLYESEEL (284 aa)) are necessary for interaction with ACTA1. A compositionally biased stretch (polar residues) spans 222 to 235 (VPTSQVRSRSTSRG). Ig-like C2-type domains are found at residues 250 to 335 (PRFI…ATFT) and 349 to 441 (PMFI…LDVT).

It belongs to the myotilin/palladin family. In terms of assembly, homodimer. Interacts with ACTA1, ACTN1, FLNA, FLNB, FLNC and MYOZ2. Interacts with the C-terminal region of MYOZ1. As to expression, expressed in skeletal muscle (at protein level). Expressed in skeletal muscle, heart, bone marrow and thyroid gland.

It localises to the cell membrane. Its subcellular location is the sarcolemma. The protein resides in the cytoplasm. The protein localises to the cytoskeleton. It is found in the myofibril. It localises to the sarcomere. Its subcellular location is the z line. Functionally, component of a complex of multiple actin cross-linking proteins. Involved in the control of myofibril assembly and stability at the Z lines in muscle cells. This is Myotilin (MYOT) from Homo sapiens (Human).